We begin with the raw amino-acid sequence, 157 residues long: 6,7-dimethyl-8-ribityllumazine synthase (157 aa).

5-amino-6-(D-ribitylamino)uracil is bound by residues Phe30, 64–66 (ALE), and 88–90 (CII). (2S)-2-hydroxy-3-oxobutyl phosphate is bound at residue 93–94 (ET). His96 serves as the catalytic Proton donor. Residue Asn121 participates in 5-amino-6-(D-ribitylamino)uracil binding. (2S)-2-hydroxy-3-oxobutyl phosphate is bound at residue Arg135.

It belongs to the DMRL synthase family.

It catalyses the reaction (2S)-2-hydroxy-3-oxobutyl phosphate + 5-amino-6-(D-ribitylamino)uracil = 6,7-dimethyl-8-(1-D-ribityl)lumazine + phosphate + 2 H2O + H(+). It participates in cofactor biosynthesis; riboflavin biosynthesis; riboflavin from 2-hydroxy-3-oxobutyl phosphate and 5-amino-6-(D-ribitylamino)uracil: step 1/2. Catalyzes the formation of 6,7-dimethyl-8-ribityllumazine by condensation of 5-amino-6-(D-ribitylamino)uracil with 3,4-dihydroxy-2-butanone 4-phosphate. This is the penultimate step in the biosynthesis of riboflavin. The chain is 6,7-dimethyl-8-ribityllumazine synthase from Albidiferax ferrireducens (strain ATCC BAA-621 / DSM 15236 / T118) (Rhodoferax ferrireducens).